The following is a 1451-amino-acid chain: Copper-transporting ATPase 2 (1451 aa).

The Cytoplasmic portion of the chain corresponds to 1 to 646 (MPEQERKVTA…KTEIKQWKKS (646 aa)). 3 consecutive HMA domains span residues 57 to 123 (TTGV…FEAS), 142 to 208 (AVVK…FEAA), and 256 to 322 (ATLP…PGYF). Positions 68, 71, 153, 156, 267, and 270 each coordinate Cu(+). Residues 328–353 (DGLEKESGSSSVPSLGSSQRQQEPGP) form a disordered region. A compositionally biased stretch (low complexity) spans 335 to 345 (GSSSVPSLGSS). One can recognise an HMA 4 domain in the interval 355-421 (RTAVLTITGI…AVEDMGFEVS (67 aa)). S469, S471, and S474 each carry phosphoserine. 2 HMA domains span residues 481–547 (QKCF…FEAA) and 557–623 (GDIE…FHAS). Cu(+)-binding residues include C492, C495, C568, and C571. Residues 647 to 668 (FLCSLVFGIPVMGLMIYMLIPS) form a helical membrane-spanning segment. Over 669-690 (SKPHETMVLDHNIIPGLSVLNL) the chain is Extracellular. The chain crosses the membrane as a helical span at residues 691-710 (IFFILCTFVQFLGGWYFYVQ). Topologically, residues 711–717 (AYKSLRH) are cytoplasmic. A helical transmembrane segment spans residues 718 to 738 (KSANMDVLIVLATTIAYAYSL). Residues 739–757 (VILVVAIAEKAEKSPVTFF) lie on the Extracellular side of the membrane. A helical transmembrane segment spans residues 758–778 (DTPPMLFVFIALGRWLEHVAK). Over 779–912 (SKTSEALAKL…KAPIQQLADR (134 aa)) the chain is Cytoplasmic. Residues 913–935 (FSGYFVPFIIIISTLTLVVWIII) traverse the membrane as a helical segment. The Extracellular portion of the chain corresponds to 936–965 (GFVDFGIVQKYFPSPSKHISQTEVIIRFAF). Residues 966-987 (QTSITVLCIACPCSLGLATPTA) form a helical membrane-spanning segment. Residues 988–1310 (VMVGTGVAAQ…LSKRTVRRIR (323 aa)) are Cytoplasmic-facing. The active-site 4-aspartylphosphate intermediate is the D1020. Positions 1255 and 1259 each coordinate Mg(2+). Residues 1311–1328 (VNLVLALIYNMVGIPIAA) traverse the membrane as a helical segment. At 1329–1339 (GVFMPIGIVLQ) the chain is on the extracellular side. The chain crosses the membrane as a helical span at residues 1340-1357 (PWMGSAAASSVSVVLSSL). Residues 1358–1451 (QLKCYRKPDL…LSDRDEEQCI (94 aa)) are Cytoplasmic-facing. 2 positions are modified to phosphoserine: S1384 and S1443.

It belongs to the cation transport ATPase (P-type) (TC 3.A.3) family. Type IB subfamily. Monomer. Interacts with COMMD1/MURR1. Interacts with DCTN4, in a copper-dependent manner. Interacts with ATOX1. Interacts (via C-terminus) with ZBTB16/PLZF. As to expression, expressed in brain, liver, kidney, spleen and stomach. In brain, detected in neuronal cells of the hippocampal formation, olfactory bulbs, cerebellum, cerebral cortex and nuclei in the brainstem. Isoform PINA is expressed during night in adult pineal gland (pinealocytes) and retina. Isoform PINA is not detected in other tissue.

Its subcellular location is the golgi apparatus. It localises to the trans-Golgi network membrane. The protein localises to the late endosome. It carries out the reaction Cu(+)(in) + ATP + H2O = Cu(+)(out) + ADP + phosphate + H(+). Copper ion transmembrane transporter involved in the export of copper out of the cells, such as the efflux of hepatic copper into the bile. This chain is Copper-transporting ATPase 2 (Atp7b), found in Rattus norvegicus (Rat).